The chain runs to 528 residues: DEAD-box ATP-dependent RNA helicase CshA (528 aa).

A Q motif motif is present at residues 2–30 (TTFRELGLSDSLLQSVESMGFEEATPIQA). Residues 33–203 (IPHALQGKDI…ERFMTEPQHI (171 aa)) form the Helicase ATP-binding domain. Residue 46 to 53 (AQTGTGKT) coordinates ATP. The short motif at 151-154 (DEAD) is the DEAD box element. In terms of domain architecture, Helicase C-terminal spans 214-374 (NIQQFYLEVQ…RMDAPTLDEA (161 aa)). The interval 428–528 (TTPIALTSEP…RKHHSRKPQA (101 aa)) is disordered. Basic and acidic residues predominate over residues 458-506 (DGNRNRSRDGRGGDGRNRDRNRDGRNRDGNRDRNREGSRDGNRGRRGEG). Residues 518–528 (ERKHHSRKPQA) are compositionally biased toward basic residues.

The protein belongs to the DEAD box helicase family. CshA subfamily. In terms of assembly, oligomerizes, may be a member of the RNA degradosome.

It localises to the cytoplasm. It catalyses the reaction ATP + H2O = ADP + phosphate + H(+). Functionally, DEAD-box RNA helicase possibly involved in RNA degradation. Unwinds dsRNA in both 5'- and 3'-directions, has RNA-dependent ATPase activity. This Bacillus thuringiensis (strain Al Hakam) protein is DEAD-box ATP-dependent RNA helicase CshA.